The chain runs to 256 residues: Imidazole glycerol phosphate synthase subunit HisF (256 aa).

Active-site residues include Asp-11 and Asp-130.

Belongs to the HisA/HisF family. Heterodimer of HisH and HisF.

The protein localises to the cytoplasm. It catalyses the reaction 5-[(5-phospho-1-deoxy-D-ribulos-1-ylimino)methylamino]-1-(5-phospho-beta-D-ribosyl)imidazole-4-carboxamide + L-glutamine = D-erythro-1-(imidazol-4-yl)glycerol 3-phosphate + 5-amino-1-(5-phospho-beta-D-ribosyl)imidazole-4-carboxamide + L-glutamate + H(+). The protein operates within amino-acid biosynthesis; L-histidine biosynthesis; L-histidine from 5-phospho-alpha-D-ribose 1-diphosphate: step 5/9. Functionally, IGPS catalyzes the conversion of PRFAR and glutamine to IGP, AICAR and glutamate. The HisF subunit catalyzes the cyclization activity that produces IGP and AICAR from PRFAR using the ammonia provided by the HisH subunit. In Cupriavidus necator (strain ATCC 17699 / DSM 428 / KCTC 22496 / NCIMB 10442 / H16 / Stanier 337) (Ralstonia eutropha), this protein is Imidazole glycerol phosphate synthase subunit HisF.